We begin with the raw amino-acid sequence, 323 residues long: Protease Do-like 5, chloroplastic (323 aa).

Residues 1-28 constitute a chloroplast transit peptide; it reads MTMALASSKAFSSIFNTLSPINQSKFVL. A thylakoid-targeting transit peptide spans 29-73; the sequence is ACSGSNHVDVIDRRRRIMIFGSSLALTSSLLGSNQQRLPMESAIA. Active-site charge relay system residues include His-147, Asp-188, and Ser-266. The serine protease stretch occupies residues 186 to 283; the sequence is DNDLAVLKIE…YGHTIGVNTA (98 aa).

Belongs to the peptidase S1C family.

The protein resides in the plastid. It localises to the chloroplast thylakoid lumen. Its function is as follows. Probable serine protease. This Arabidopsis thaliana (Mouse-ear cress) protein is Protease Do-like 5, chloroplastic (DEGP5).